Here is a 156-residue protein sequence, read N- to C-terminus: MKIIFVFALLAIVACNASARFDPLSQSYRQYQLQSHLLLQQQVLSPCSEFVRQQYSIVATPFWQPATFQLINNQVMQQQCCQQLRLVAQQSHYQAISIVQAIVQQLQLQQFSGVYFDQTQAQAQTLLTFNLPSICGIYPNYYSAPRSIATVGGVWY.

Residues 1 to 19 (MKIIFVFALLAIVACNASA) form the signal peptide. The octapeptide unique to cereal prolamins stretch occupies residues 77–84 (QQQCCQQL).

Belongs to the prolamin family.

It localises to the vacuole. The protein localises to the aleurone grain. In terms of biological role, seed storage protein; serves as a source of nitrogen, carbon and sulfur for the young developing seedling. This is 13 kDa prolamin C (PROLM25) from Oryza sativa subsp. japonica (Rice).